A 195-amino-acid chain; its full sequence is Peptide methionine sulfoxide reductase MsrA 2 (195 aa).

Cysteine 18 is a catalytic residue.

The protein belongs to the MsrA Met sulfoxide reductase family.

It carries out the reaction L-methionyl-[protein] + [thioredoxin]-disulfide + H2O = L-methionyl-(S)-S-oxide-[protein] + [thioredoxin]-dithiol. It catalyses the reaction [thioredoxin]-disulfide + L-methionine + H2O = L-methionine (S)-S-oxide + [thioredoxin]-dithiol. Has an important function as a repair enzyme for proteins that have been inactivated by oxidation. Catalyzes the reversible oxidation-reduction of methionine sulfoxide in proteins to methionine. The chain is Peptide methionine sulfoxide reductase MsrA 2 (msrA2) from Mesorhizobium japonicum (strain LMG 29417 / CECT 9101 / MAFF 303099) (Mesorhizobium loti (strain MAFF 303099)).